We begin with the raw amino-acid sequence, 113 residues long: Antisense of depressing factor protein 1 (113 aa).

The span at 1–11 (MGKCSMKKKGV) shows a compositional bias: basic residues. The disordered stretch occupies residues 1–35 (MGKCSMKKKGVGKNVGVGKKVQKKRSISTAERKRT).

The protein belongs to the ADF1 family.

It localises to the nucleus. In terms of biological role, transcriptional repressor which negatively regulates transcription of FYV5 by binding to the promoter on the sense strand. The chain is Antisense of depressing factor protein 1 from Saccharomyces cerevisiae (strain ATCC 204508 / S288c) (Baker's yeast).